The following is a 305-amino-acid chain: Translation initiation factor eIF2B subunit alpha (305 aa).

Ser-2 is subject to N-acetylserine. The residue at position 291 (Thr-291) is a Phosphothreonine.

Belongs to the eIF-2B alpha/beta/delta subunits family. As to quaternary structure, component of the translation initiation factor 2B (eIF2B) complex which is a heterodecamer of two sets of five different subunits: alpha, beta, gamma, delta and epsilon. Subunits alpha, beta and delta comprise a regulatory subcomplex and subunits epsilon and gamma comprise a catalytic subcomplex. Within the complex, the hexameric regulatory complex resides at the center, with the two heterodimeric catalytic subcomplexes bound on opposite sides.

The protein localises to the cytoplasm. It is found in the cytosol. Acts as a component of the translation initiation factor 2B (eIF2B) complex, which catalyzes the exchange of GDP for GTP on the eukaryotic initiation factor 2 (eIF2) complex gamma subunit. Its guanine nucleotide exchange factor activity is repressed when bound to eIF2 complex phosphorylated on the alpha subunit, thereby limiting the amount of methionyl-initiator methionine tRNA available to the ribosome and consequently global translation is repressed. It activates the translation of GCN4 in response to low amino acid, carbon, or purine availability, by suppressing the inhibitory effects of multiple uORFs present in the leader of GCN4 mRNA. It may promote either repression or activation of GCN4 expression depending on amino acid availability. Modulation of GCN3 regulatory function in response to amino acid availability occurs post-translationally. In Saccharomyces cerevisiae (strain ATCC 204508 / S288c) (Baker's yeast), this protein is Translation initiation factor eIF2B subunit alpha.